Reading from the N-terminus, the 473-residue chain is Glutamate--tRNA ligase (473 aa).

The 'HIGH' region signature appears at 10–20; that stretch reads PSPTGYLHLGN. Residues Cys-98, Cys-100, Cys-125, and His-127 each contribute to the Zn(2+) site. The 'KMSKS' region signature appears at 242 to 246; it reads KLSKR. Lys-245 lines the ATP pocket.

The protein belongs to the class-I aminoacyl-tRNA synthetase family. Glutamate--tRNA ligase type 1 subfamily. In terms of assembly, monomer. The cofactor is Zn(2+).

It is found in the cytoplasm. The catalysed reaction is tRNA(Glu) + L-glutamate + ATP = L-glutamyl-tRNA(Glu) + AMP + diphosphate. In terms of biological role, catalyzes the attachment of glutamate to tRNA(Glu) in a two-step reaction: glutamate is first activated by ATP to form Glu-AMP and then transferred to the acceptor end of tRNA(Glu). This chain is Glutamate--tRNA ligase, found in Aquifex aeolicus (strain VF5).